Consider the following 164-residue polypeptide: Putative pre-16S rRNA nuclease (164 aa).

The protein belongs to the YqgF nuclease family.

It localises to the cytoplasm. Functionally, could be a nuclease involved in processing of the 5'-end of pre-16S rRNA. The sequence is that of Putative pre-16S rRNA nuclease from Synechococcus sp. (strain CC9902).